The sequence spans 123 residues: Ribosome-binding factor A (123 aa).

The protein belongs to the RbfA family. Monomer. Binds 30S ribosomal subunits, but not 50S ribosomal subunits or 70S ribosomes.

Its subcellular location is the cytoplasm. One of several proteins that assist in the late maturation steps of the functional core of the 30S ribosomal subunit. Associates with free 30S ribosomal subunits (but not with 30S subunits that are part of 70S ribosomes or polysomes). Required for efficient processing of 16S rRNA. May interact with the 5'-terminal helix region of 16S rRNA. The polypeptide is Ribosome-binding factor A (Rickettsia bellii (strain OSU 85-389)).